The primary structure comprises 67 residues: ATP synthase protein 8 (67 aa).

Residues 8-24 form a helical membrane-spanning segment; the sequence is TWFTTVLSTTITLFILM. Lysine 54 is subject to N6-acetyllysine; alternate. Lysine 54 is modified (N6-succinyllysine; alternate). Lysine 57 bears the N6-acetyllysine mark.

This sequence belongs to the ATPase protein 8 family. F-type ATPases have 2 components, CF(1) - the catalytic core - and CF(0) - the membrane proton channel. Component of an ATP synthase complex composed of ATP5PB, ATP5MC1, ATP5F1E, ATP5PD, ATP5ME, ATP5PF, ATP5MF, MT-ATP6, MT-ATP8, ATP5F1A, ATP5F1B, ATP5F1D, ATP5F1C, ATP5PO, ATP5MG, ATP5MK and ATP5MJ. Interacts with PRICKLE3.

The protein resides in the mitochondrion membrane. Its function is as follows. Mitochondrial membrane ATP synthase (F(1)F(0) ATP synthase or Complex V) produces ATP from ADP in the presence of a proton gradient across the membrane which is generated by electron transport complexes of the respiratory chain. F-type ATPases consist of two structural domains, F(1) - containing the extramembraneous catalytic core and F(0) - containing the membrane proton channel, linked together by a central stalk and a peripheral stalk. During catalysis, ATP synthesis in the catalytic domain of F(1) is coupled via a rotary mechanism of the central stalk subunits to proton translocation. Part of the complex F(0) domain. Minor subunit located with subunit a in the membrane. The sequence is that of ATP synthase protein 8 (MT-ATP8) from Microtus pennsylvanicus (Meadow vole).